The sequence spans 140 residues: Nucleoside diphosphate kinase (140 aa).

Positions 11, 59, 87, 93, 104, and 114 each coordinate ATP. The active-site Pros-phosphohistidine intermediate is the H117.

Belongs to the NDK family. Homotetramer. Mg(2+) is required as a cofactor.

It is found in the cytoplasm. The catalysed reaction is a 2'-deoxyribonucleoside 5'-diphosphate + ATP = a 2'-deoxyribonucleoside 5'-triphosphate + ADP. It carries out the reaction a ribonucleoside 5'-diphosphate + ATP = a ribonucleoside 5'-triphosphate + ADP. Its function is as follows. Major role in the synthesis of nucleoside triphosphates other than ATP. The ATP gamma phosphate is transferred to the NDP beta phosphate via a ping-pong mechanism, using a phosphorylated active-site intermediate. In Rhizobium etli (strain ATCC 51251 / DSM 11541 / JCM 21823 / NBRC 15573 / CFN 42), this protein is Nucleoside diphosphate kinase.